A 179-amino-acid chain; its full sequence is Large ribosomal subunit protein uL5 (179 aa).

This sequence belongs to the universal ribosomal protein uL5 family. As to quaternary structure, part of the 50S ribosomal subunit; part of the 5S rRNA/L5/L18/L25 subcomplex. Contacts the 5S rRNA and the P site tRNA. Forms a bridge to the 30S subunit in the 70S ribosome.

In terms of biological role, this is one of the proteins that bind and probably mediate the attachment of the 5S RNA into the large ribosomal subunit, where it forms part of the central protuberance. In the 70S ribosome it contacts protein S13 of the 30S subunit (bridge B1b), connecting the 2 subunits; this bridge is implicated in subunit movement. Contacts the P site tRNA; the 5S rRNA and some of its associated proteins might help stabilize positioning of ribosome-bound tRNAs. The sequence is that of Large ribosomal subunit protein uL5 from Photobacterium profundum (strain SS9).